Reading from the N-terminus, the 848-residue chain is Translation initiation factor IF-2 (848 aa).

The segment at 90–253 (RTYIKRAELQ…PKEKRHAFER (164 aa)) is disordered. Low complexity predominate over residues 105–170 (EAPAPEEPVQ…SAEPAIAPED (66 aa)). Composition is skewed to basic residues over residues 204–215 (PKKKQAGHRGPR) and 236–248 (KPLR…KEKR). Positions 344–511 (KRAPVVSVMG…AVLLQAEILE (168 aa)) constitute a tr-type G domain. Residues 353 to 360 (GHVDHGKT) are G1. Residue 353-360 (GHVDHGKT) coordinates GTP. Residues 378-382 (GITQH) form a G2 region. Positions 399–402 (DTPG) are G3. GTP-binding positions include 399–403 (DTPGH) and 453–456 (NKMD). The segment at 453–456 (NKMD) is G4. Residues 489-491 (SAH) are G5.

Belongs to the TRAFAC class translation factor GTPase superfamily. Classic translation factor GTPase family. IF-2 subfamily.

Its subcellular location is the cytoplasm. Functionally, one of the essential components for the initiation of protein synthesis. Protects formylmethionyl-tRNA from spontaneous hydrolysis and promotes its binding to the 30S ribosomal subunits. Also involved in the hydrolysis of GTP during the formation of the 70S ribosomal complex. In Marinobacter nauticus (strain ATCC 700491 / DSM 11845 / VT8) (Marinobacter aquaeolei), this protein is Translation initiation factor IF-2.